A 325-amino-acid polypeptide reads, in one-letter code: Elongation factor P--(R)-beta-lysine ligase (325 aa).

76-78 (SPE) serves as a coordination point for substrate. ATP contacts are provided by residues 100 to 102 (RNE) and asparagine 109. Residue tyrosine 118 coordinates substrate. 244 to 245 (EL) is a binding site for ATP. A substrate-binding site is contributed by glutamate 251. Position 300 (glycine 300) interacts with ATP.

This sequence belongs to the class-II aminoacyl-tRNA synthetase family. EpmA subfamily. In terms of assembly, homodimer.

It catalyses the reaction D-beta-lysine + L-lysyl-[protein] + ATP = N(6)-((3R)-3,6-diaminohexanoyl)-L-lysyl-[protein] + AMP + diphosphate + H(+). With EpmB is involved in the beta-lysylation step of the post-translational modification of translation elongation factor P (EF-P) on 'Lys-34'. Catalyzes the ATP-dependent activation of (R)-beta-lysine produced by EpmB, forming a lysyl-adenylate, from which the beta-lysyl moiety is then transferred to the epsilon-amino group of EF-P 'Lys-34'. This is Elongation factor P--(R)-beta-lysine ligase from Salmonella paratyphi A (strain ATCC 9150 / SARB42).